The following is a 585-amino-acid chain: Putative ABC transporter ATP-binding protein MG187 (585 aa).

In terms of domain architecture, ABC transporter spans 8–468 (IELKNIVVDF…PANEFVARFL (461 aa)). Residue 40 to 47 (GPSGCGKT) coordinates ATP.

Belongs to the ABC transporter superfamily.

The chain is Putative ABC transporter ATP-binding protein MG187 from Mycoplasma genitalium (strain ATCC 33530 / DSM 19775 / NCTC 10195 / G37) (Mycoplasmoides genitalium).